Consider the following 463-residue polypeptide: MTTETRSLYSQLPAIDRLLRDSSFLSLRDTYGHTRVVELLRQMLDEAREVIRDSQTLPAWCENWAQEVDARLTKEAQSALRPVINLTGTVLHTNLGRALQAEAAVEAVMKAMRSPVTLEYDLDDAGRGHRDRALAQLLCRITGAEDACIVNNNAAAVLLMLAATASGKEVVVSRGELVEIGGAFRIPDVMRQAGCTLHEVGTTNRTHANDYRQAVNENTALLMKVHTSNYSIQGFTKAIDEAELVALGKELDVPVVTDLGSGSLVDLSQYGLPKEPMPQELIAAGVSLVSFSGDKLLGGPQAGIIVGKKEMIARLQSHPLKRALRADKMTLAALEATLRLYLHPEALSEKLPTLRLLTRSAEVIQIQAQRLQAPLAAHYGAEFAVQVMPCLSQIGSGSLPVDRLPSAALTFTPHDGRGSHLESLAARWRELPVPVIGRIYDGRLWLDLRCLEDEQRFLEMLLK.

K295 bears the N6-(pyridoxal phosphate)lysine mark.

This sequence belongs to the SelA family. In terms of assembly, homodecamer; pentamer of dimers. Binds only one seryl-tRNA(Sec) per dimer. Pyridoxal 5'-phosphate serves as cofactor.

Its subcellular location is the cytoplasm. It catalyses the reaction L-seryl-tRNA(Sec) + selenophosphate + H(+) = L-selenocysteinyl-tRNA(Sec) + phosphate. It participates in aminoacyl-tRNA biosynthesis; selenocysteinyl-tRNA(Sec) biosynthesis; selenocysteinyl-tRNA(Sec) from L-seryl-tRNA(Sec) (bacterial route): step 1/1. Converts seryl-tRNA(Sec) to selenocysteinyl-tRNA(Sec) required for selenoprotein biosynthesis. The sequence is that of L-seryl-tRNA(Sec) selenium transferase from Escherichia coli O81 (strain ED1a).